The following is a 426-amino-acid chain: 4-hydroxy-3-methylbut-2-en-1-yl diphosphate synthase (flavodoxin) (426 aa).

Residues Cys320, Cys323, Cys366, and Glu373 each coordinate [4Fe-4S] cluster.

This sequence belongs to the IspG family. [4Fe-4S] cluster serves as cofactor.

It catalyses the reaction (2E)-4-hydroxy-3-methylbut-2-enyl diphosphate + oxidized [flavodoxin] + H2O + 2 H(+) = 2-C-methyl-D-erythritol 2,4-cyclic diphosphate + reduced [flavodoxin]. The protein operates within isoprenoid biosynthesis; isopentenyl diphosphate biosynthesis via DXP pathway; isopentenyl diphosphate from 1-deoxy-D-xylulose 5-phosphate: step 5/6. Its function is as follows. Converts 2C-methyl-D-erythritol 2,4-cyclodiphosphate (ME-2,4cPP) into 1-hydroxy-2-methyl-2-(E)-butenyl 4-diphosphate. In Wolbachia sp. subsp. Drosophila simulans (strain wRi), this protein is 4-hydroxy-3-methylbut-2-en-1-yl diphosphate synthase (flavodoxin).